Here is a 188-residue protein sequence, read N- to C-terminus: Holliday junction branch migration complex subunit RuvA (188 aa).

A domain I region spans residues 1–64; the sequence is MIAGISGRVL…QDGITLYGFS (64 aa). The segment at 65–143 is domain II; it reads NEMKKELFLS…SAGIKDMRIY (79 aa). Residue tyrosine 143 is a region of interest, flexible linker. The tract at residues 143-186 is domain III; sequence YHESLEALVSLGYPEKQAREAVKQVYREGMKTSELIKEALKFLS.

It belongs to the RuvA family. Homotetramer. Forms an RuvA(8)-RuvB(12)-Holliday junction (HJ) complex. HJ DNA is sandwiched between 2 RuvA tetramers; dsDNA enters through RuvA and exits via RuvB. An RuvB hexamer assembles on each DNA strand where it exits the tetramer. Each RuvB hexamer is contacted by two RuvA subunits (via domain III) on 2 adjacent RuvB subunits; this complex drives branch migration. In the full resolvosome a probable DNA-RuvA(4)-RuvB(12)-RuvC(2) complex forms which resolves the HJ.

It is found in the cytoplasm. Its function is as follows. The RuvA-RuvB-RuvC complex processes Holliday junction (HJ) DNA during genetic recombination and DNA repair, while the RuvA-RuvB complex plays an important role in the rescue of blocked DNA replication forks via replication fork reversal (RFR). RuvA specifically binds to HJ cruciform DNA, conferring on it an open structure. The RuvB hexamer acts as an ATP-dependent pump, pulling dsDNA into and through the RuvAB complex. HJ branch migration allows RuvC to scan DNA until it finds its consensus sequence, where it cleaves and resolves the cruciform DNA. Promotes Holliday junction (HJ) branch migration in conjunction with RuvB. This is Holliday junction branch migration complex subunit RuvA from Thermotoga maritima (strain ATCC 43589 / DSM 3109 / JCM 10099 / NBRC 100826 / MSB8).